Consider the following 197-residue polypeptide: Dephospho-CoA kinase (197 aa).

The region spanning 3–197 is the DPCK domain; sequence IIGLTGGIAS…IEEIWAKRFP (195 aa). 11-16 contributes to the ATP binding site; sequence ASGKST.

It belongs to the CoaE family.

The protein resides in the cytoplasm. The catalysed reaction is 3'-dephospho-CoA + ATP = ADP + CoA + H(+). Its pathway is cofactor biosynthesis; coenzyme A biosynthesis; CoA from (R)-pantothenate: step 5/5. Catalyzes the phosphorylation of the 3'-hydroxyl group of dephosphocoenzyme A to form coenzyme A. In Geobacter sulfurreducens (strain ATCC 51573 / DSM 12127 / PCA), this protein is Dephospho-CoA kinase.